A 308-amino-acid polypeptide reads, in one-letter code: RING-H2 finger protein ATL63 (308 aa).

A helical membrane pass occupies residues 29–49; that stretch reads VLLAALVFLLLVVLFVLLLHF. The RING-type; atypical zinc finger occupies 138-180; the sequence is CVICLGLWEAGDFGRKLRNCGHGFHVECIDMWLSSHSTCPLCR. Residues 252–308 form a disordered region; sequence VFDDDEEINDGGTRSDRRRSMSMTSSASSSLMRMLSSSSSRSERNKVFPTARQDSSK. A compositionally biased stretch (low complexity) spans 272 to 291; sequence MSMTSSASSSLMRMLSSSSS.

It belongs to the RING-type zinc finger family. ATL subfamily.

Its subcellular location is the membrane. It catalyses the reaction S-ubiquitinyl-[E2 ubiquitin-conjugating enzyme]-L-cysteine + [acceptor protein]-L-lysine = [E2 ubiquitin-conjugating enzyme]-L-cysteine + N(6)-ubiquitinyl-[acceptor protein]-L-lysine.. It functions in the pathway protein modification; protein ubiquitination. The sequence is that of RING-H2 finger protein ATL63 (ATL63) from Arabidopsis thaliana (Mouse-ear cress).